A 79-amino-acid polypeptide reads, in one-letter code: ATP synthase subunit 9, mitochondrial (79 aa).

2 helical membrane passes run 21–41 and 59–79; these read SGLI…ILAF and FALT…ILFI.

Belongs to the ATPase C chain family. As to quaternary structure, F-type ATPases have 2 components, CF(1) - the catalytic core - and CF(0) - the membrane proton channel. CF(1) has five subunits: alpha(3), beta(3), gamma(1), delta(1), epsilon(1). CF(0) has three main subunits: a, b and c.

The protein resides in the mitochondrion membrane. Functionally, mitochondrial membrane ATP synthase (F(1)F(0) ATP synthase or Complex V) produces ATP from ADP in the presence of a proton gradient across the membrane which is generated by electron transport complexes of the respiratory chain. F-type ATPases consist of two structural domains, F(1) - containing the extramembraneous catalytic core and F(0) - containing the membrane proton channel, linked together by a central stalk and a peripheral stalk. During catalysis, ATP synthesis in the catalytic domain of F(1) is coupled via a rotary mechanism of the central stalk subunits to proton translocation. Part of the complex F(0) domain. A homomeric c-ring of probably 10 subunits is part of the complex rotary element. The polypeptide is ATP synthase subunit 9, mitochondrial (ATP9) (Acanthamoeba castellanii (Amoeba)).